Consider the following 277-residue polypeptide: Diaminopimelate epimerase (277 aa).

Substrate-binding residues include Asn11 and Asn62. Residue Cys71 is the Proton donor of the active site. Residues 72–73 (GN), Asn160, Asn193, and 211–212 (ER) each bind substrate. The active-site Proton acceptor is Cys220. 221 to 222 (GT) contacts substrate.

Belongs to the diaminopimelate epimerase family. As to quaternary structure, homodimer.

The protein resides in the cytoplasm. It carries out the reaction (2S,6S)-2,6-diaminopimelate = meso-2,6-diaminopimelate. Its pathway is amino-acid biosynthesis; L-lysine biosynthesis via DAP pathway; DL-2,6-diaminopimelate from LL-2,6-diaminopimelate: step 1/1. Catalyzes the stereoinversion of LL-2,6-diaminopimelate (L,L-DAP) to meso-diaminopimelate (meso-DAP), a precursor of L-lysine. The chain is Diaminopimelate epimerase from Methanococcus maripaludis (strain C6 / ATCC BAA-1332).